The sequence spans 189 residues: Small ribosomal subunit protein uS4 (189 aa).

The S4 RNA-binding domain maps to 107-178 (RRLQTQVFKL…AGRVKRKNQG (72 aa)). The segment at 160 to 189 (HNSPYGGGRAGRVKRKNQGKGGEEGAEEEE) is disordered.

Belongs to the universal ribosomal protein uS4 family. As to quaternary structure, component of the small ribosomal subunit. Mature ribosomes consist of a small (40S) and a large (60S) subunit. The 40S subunit contains about 32 different proteins and 1 molecule of RNA (18S). The 60S subunit contains 45 different proteins and 3 molecules of RNA (25S, 5.8S and 5S).

The protein resides in the cytoplasm. Its function is as follows. Component of the ribosome, a large ribonucleoprotein complex responsible for the synthesis of proteins in the cell. The small ribosomal subunit (SSU) binds messenger RNAs (mRNAs) and translates the encoded message by selecting cognate aminoacyl-transfer RNA (tRNA) molecules. The large subunit (LSU) contains the ribosomal catalytic site termed the peptidyl transferase center (PTC), which catalyzes the formation of peptide bonds, thereby polymerizing the amino acids delivered by tRNAs into a polypeptide chain. The nascent polypeptides leave the ribosome through a tunnel in the LSU and interact with protein factors that function in enzymatic processing, targeting, and the membrane insertion of nascent chains at the exit of the ribosomal tunnel. RPS9B is involved in nucleolar processing of pre-18S ribosomal RNA and ribosome assembly. In Candida albicans (strain SC5314 / ATCC MYA-2876) (Yeast), this protein is Small ribosomal subunit protein uS4 (RPS9B).